A 165-amino-acid chain; its full sequence is Lipoprotein signal peptidase (165 aa).

Transmembrane regions (helical) follow at residues 9–29 (PFLW…LAVV), 65–85 (WQKY…LFFL), and 97–119 (TGYA…HGFV). Active-site residues include D121 and D139. The helical transmembrane segment at 134-154 (VFNVADIAICIGAGLLAIDAF) threads the bilayer.

Belongs to the peptidase A8 family.

The protein resides in the cell inner membrane. It carries out the reaction Release of signal peptides from bacterial membrane prolipoproteins. Hydrolyzes -Xaa-Yaa-Zaa-|-(S,diacylglyceryl)Cys-, in which Xaa is hydrophobic (preferably Leu), and Yaa (Ala or Ser) and Zaa (Gly or Ala) have small, neutral side chains.. It participates in protein modification; lipoprotein biosynthesis (signal peptide cleavage). In terms of biological role, this protein specifically catalyzes the removal of signal peptides from prolipoproteins. The chain is Lipoprotein signal peptidase from Histophilus somni (strain 2336) (Haemophilus somnus).